The following is a 76-amino-acid chain: Bowman-Birk type proteinase inhibitor DE-3 (76 aa).

Cystine bridges form between C16–C70, C17–C32, C20–C66, C22–C30, C40–C47, C44–C59, and C49–C57.

It belongs to the Bowman-Birk serine protease inhibitor family.

The protein is Bowman-Birk type proteinase inhibitor DE-3 of Macrotyloma axillare (Perennial horse gram).